Here is a 372-residue protein sequence, read N- to C-terminus: Queuine tRNA-ribosyltransferase (372 aa).

Asp92 functions as the Proton acceptor in the catalytic mechanism. Substrate-binding positions include 92–96 (DSGGY), Asp146, Gln188, and Gly215. Positions 246–252 (GIGSLKE) are RNA binding. Catalysis depends on Asp265, which acts as the Nucleophile. Residues 270 to 274 (TRLGR) form an RNA binding; important for wobble base 34 recognition region. Residues Cys303, Cys305, Cys308, and His334 each contribute to the Zn(2+) site.

The protein belongs to the queuine tRNA-ribosyltransferase family. In terms of assembly, homodimer. Within each dimer, one monomer is responsible for RNA recognition and catalysis, while the other monomer binds to the replacement base PreQ1. Zn(2+) is required as a cofactor.

The catalysed reaction is 7-aminomethyl-7-carbaguanine + guanosine(34) in tRNA = 7-aminomethyl-7-carbaguanosine(34) in tRNA + guanine. The protein operates within tRNA modification; tRNA-queuosine biosynthesis. In terms of biological role, catalyzes the base-exchange of a guanine (G) residue with the queuine precursor 7-aminomethyl-7-deazaguanine (PreQ1) at position 34 (anticodon wobble position) in tRNAs with GU(N) anticodons (tRNA-Asp, -Asn, -His and -Tyr). Catalysis occurs through a double-displacement mechanism. The nucleophile active site attacks the C1' of nucleotide 34 to detach the guanine base from the RNA, forming a covalent enzyme-RNA intermediate. The proton acceptor active site deprotonates the incoming PreQ1, allowing a nucleophilic attack on the C1' of the ribose to form the product. After dissociation, two additional enzymatic reactions on the tRNA convert PreQ1 to queuine (Q), resulting in the hypermodified nucleoside queuosine (7-(((4,5-cis-dihydroxy-2-cyclopenten-1-yl)amino)methyl)-7-deazaguanosine). The sequence is that of Queuine tRNA-ribosyltransferase from Prochlorococcus marinus (strain AS9601).